Here is an 885-residue protein sequence, read N- to C-terminus: Translation initiation factor IF-2 (885 aa).

Disordered regions lie at residues 135-159 (KAKA…AAAE) and 184-289 (QAEA…PESM). Over residues 184–232 (QAEATKRKQDEEAAKAAEKARLLAEENSKRWAEEERQRLEAERYSDHHI) the composition is skewed to basic and acidic residues. The span at 253-266 (GRRARNKNTAKSKR) shows a compositional bias: basic residues. Over residues 267–276 (GGKDARDGRE) the composition is skewed to basic and acidic residues. Residues 385 to 554 (PRAPVVTIMG…LLQAEVLELK (170 aa)) form the tr-type G domain. A G1 region spans residues 394–401 (GHVDHGKT). Residue 394 to 401 (GHVDHGKT) participates in GTP binding. The G2 stretch occupies residues 419 to 423 (GITQH). The interval 440 to 443 (DTPG) is G3. Residues 440–444 (DTPGH) and 494–497 (NKMD) each bind GTP. The G4 stretch occupies residues 494-497 (NKMD). The segment at 530–532 (SAK) is G5.

The protein belongs to the TRAFAC class translation factor GTPase superfamily. Classic translation factor GTPase family. IF-2 subfamily.

It is found in the cytoplasm. Its function is as follows. One of the essential components for the initiation of protein synthesis. Protects formylmethionyl-tRNA from spontaneous hydrolysis and promotes its binding to the 30S ribosomal subunits. Also involved in the hydrolysis of GTP during the formation of the 70S ribosomal complex. The sequence is that of Translation initiation factor IF-2 from Shewanella sp. (strain MR-7).